The primary structure comprises 147 residues: uncharacterized protein (147 aa).

A helical transmembrane segment spans residues 13–35 (NSRINLLGILVLNVVCGKSSIFF).

The protein localises to the membrane. This is an uncharacterized protein from Saccharomyces cerevisiae (strain ATCC 204508 / S288c) (Baker's yeast).